We begin with the raw amino-acid sequence, 1052 residues long: Error-prone DNA polymerase (1052 aa).

It belongs to the DNA polymerase type-C family. DnaE2 subfamily.

It is found in the cytoplasm. The catalysed reaction is DNA(n) + a 2'-deoxyribonucleoside 5'-triphosphate = DNA(n+1) + diphosphate. In terms of biological role, DNA polymerase involved in damage-induced mutagenesis and translesion synthesis (TLS). It is not the major replicative DNA polymerase. The polypeptide is Error-prone DNA polymerase (Bordetella parapertussis (strain 12822 / ATCC BAA-587 / NCTC 13253)).